The sequence spans 435 residues: Histidinol dehydrogenase (435 aa).

Residues Tyr-131, Gln-189, and Asn-212 each coordinate NAD(+). 3 residues coordinate substrate: Ser-238, Gln-260, and His-263. Gln-260 and His-263 together coordinate Zn(2+). Residues Glu-327 and His-328 each act as proton acceptor in the active site. Substrate is bound by residues His-328, Asp-361, Glu-415, and His-420. Zn(2+) is bound at residue Asp-361. His-420 lines the Zn(2+) pocket.

It belongs to the histidinol dehydrogenase family. In terms of assembly, homodimer. Requires Zn(2+) as cofactor.

It carries out the reaction L-histidinol + 2 NAD(+) + H2O = L-histidine + 2 NADH + 3 H(+). It functions in the pathway amino-acid biosynthesis; L-histidine biosynthesis; L-histidine from 5-phospho-alpha-D-ribose 1-diphosphate: step 9/9. In terms of biological role, catalyzes the sequential NAD-dependent oxidations of L-histidinol to L-histidinaldehyde and then to L-histidine. The chain is Histidinol dehydrogenase (hisD) from Buchnera aphidicola subsp. Schizaphis graminum (strain Sg).